A 103-amino-acid polypeptide reads, in one-letter code: Flagellar hook-basal body complex protein FliE (103 aa).

The protein belongs to the FliE family.

Its subcellular location is the bacterial flagellum basal body. The protein is Flagellar hook-basal body complex protein FliE of Cronobacter sakazakii (strain ATCC BAA-894) (Enterobacter sakazakii).